The chain runs to 300 residues: MEINYWYKLTFEIEANLEEIIIWKLNELGISSYALEILLNNKNNKKVLIWLPNLNWPKSLRIKLERNIKEVLDKNNYRTNCFEWIVIEQEDWMSSWKKYWGPELVGKKLLVLPCWLELPEKFKNKKVIKIDPGAAFGTGSHPTTSLCLEELEKFSLSNKKILDIGSGSGILSIAARYFGASKVYSIDNDYLAINSTESNFRLNFGDLDDLKTYLGRFDELVSKYSLKNFDLILCNILAEVIKGIIPDIRNCLKINGEVIFSGILNSQKDEIIKLLNASNLQINDVSSKQGWVCITAQKII.

The S-adenosyl-L-methionine site is built by Thr144, Gly165, Asp187, and Asn235.

Belongs to the methyltransferase superfamily. PrmA family.

It is found in the cytoplasm. It carries out the reaction L-lysyl-[protein] + 3 S-adenosyl-L-methionine = N(6),N(6),N(6)-trimethyl-L-lysyl-[protein] + 3 S-adenosyl-L-homocysteine + 3 H(+). Methylates ribosomal protein L11. The sequence is that of Ribosomal protein L11 methyltransferase from Prochlorococcus marinus (strain MIT 9515).